Here is a 165-residue protein sequence, read N- to C-terminus: Free methionine-R-sulfoxide reductase (165 aa).

In terms of domain architecture, GAF spans 49 to 149 (LLEDDTLVLG…LRQLVAQLEK (101 aa)).

The protein belongs to the free Met sulfoxide reductase family.

The catalysed reaction is [thioredoxin]-disulfide + L-methionine + H2O = L-methionine (R)-S-oxide + [thioredoxin]-dithiol. Catalyzes the reversible oxidation-reduction of the R-enantiomer of free methionine sulfoxide to methionine. Specific for free L-methionine-(R)-S-oxide. This Escherichia coli (strain K12) protein is Free methionine-R-sulfoxide reductase (msrC).